Reading from the N-terminus, the 162-residue chain is Transcription elongation factor GreA (162 aa).

Residues 45–74 (ENAEYEAAREKQAFIEGRIKELEDMTARAE) adopt a coiled-coil conformation.

The protein belongs to the GreA/GreB family.

Functionally, necessary for efficient RNA polymerase transcription elongation past template-encoded arresting sites. The arresting sites in DNA have the property of trapping a certain fraction of elongating RNA polymerases that pass through, resulting in locked ternary complexes. Cleavage of the nascent transcript by cleavage factors such as GreA or GreB allows the resumption of elongation from the new 3'terminus. GreA releases sequences of 2 to 3 nucleotides. This is Transcription elongation factor GreA from Rickettsia felis (strain ATCC VR-1525 / URRWXCal2) (Rickettsia azadi).